The primary structure comprises 405 residues: Low-salt glycan biosynthesis sulfotransferase Agl7 (405 aa).

3 residues coordinate Ca(2+): Asp-24, Asp-201, and His-202.

It belongs to the sulfatase family. It depends on Ca(2+) as a cofactor.

It functions in the pathway protein modification; protein glycosylation. The protein operates within cell surface structure biogenesis; S-layer biogenesis. Its function is as follows. Involved in N-glycan biosynthetic pathway that takes place under low-salt conditions (1.75 M instead of 3.4 M). Participates in the formation of the tetrasaccharide present at 'Asn-532' of S-layer glycoprotein Csg, consisting of a sulfated hexose, 2 hexoses and rhamnose. Mediates sulfation of sugar 1 in the tetrasaccharide. The chain is Low-salt glycan biosynthesis sulfotransferase Agl7 from Haloferax volcanii (strain ATCC 29605 / DSM 3757 / JCM 8879 / NBRC 14742 / NCIMB 2012 / VKM B-1768 / DS2) (Halobacterium volcanii).